The chain runs to 270 residues: UPF0354 protein BT9727_4425 (270 aa).

It belongs to the UPF0354 family.

The sequence is that of UPF0354 protein BT9727_4425 from Bacillus thuringiensis subsp. konkukian (strain 97-27).